A 165-amino-acid polypeptide reads, in one-letter code: Peptide methionine sulfoxide reductase MsrA (165 aa).

The active site involves C10.

Belongs to the MsrA Met sulfoxide reductase family.

It carries out the reaction L-methionyl-[protein] + [thioredoxin]-disulfide + H2O = L-methionyl-(S)-S-oxide-[protein] + [thioredoxin]-dithiol. It catalyses the reaction [thioredoxin]-disulfide + L-methionine + H2O = L-methionine (S)-S-oxide + [thioredoxin]-dithiol. Has an important function as a repair enzyme for proteins that have been inactivated by oxidation. Catalyzes the reversible oxidation-reduction of methionine sulfoxide in proteins to methionine. The chain is Peptide methionine sulfoxide reductase MsrA from Campylobacter jejuni subsp. jejuni serotype O:6 (strain 81116 / NCTC 11828).